Consider the following 343-residue polypeptide: Methionine import ATP-binding protein MetN (343 aa).

The 240-residue stretch at 2–241 folds into the ABC transporter domain; it reads IKLSNITKVF…PKTPLAQKFI (240 aa). 38-45 lines the ATP pocket; it reads GASGAGKS.

Belongs to the ABC transporter superfamily. Methionine importer (TC 3.A.1.24) family. As to quaternary structure, the complex is composed of two ATP-binding proteins (MetN), two transmembrane proteins (MetI) and a solute-binding protein (MetQ).

Its subcellular location is the cell inner membrane. It carries out the reaction L-methionine(out) + ATP + H2O = L-methionine(in) + ADP + phosphate + H(+). The enzyme catalyses D-methionine(out) + ATP + H2O = D-methionine(in) + ADP + phosphate + H(+). Functionally, part of the ABC transporter complex MetNIQ involved in methionine import. Responsible for energy coupling to the transport system. This chain is Methionine import ATP-binding protein MetN, found in Shigella flexneri serotype 5b (strain 8401).